The following is a 202-amino-acid chain: Pyridoxal 5'-phosphate synthase subunit PdxT (202 aa).

48 to 50 (GES) lines the L-glutamine pocket. The Nucleophile role is filled by Cys-80. Residues Arg-112 and 139–140 (IR) each bind L-glutamine. Active-site charge relay system residues include His-180 and Glu-182.

Belongs to the glutaminase PdxT/SNO family. As to quaternary structure, in the presence of PdxS, forms a dodecamer of heterodimers. Only shows activity in the heterodimer.

It carries out the reaction aldehydo-D-ribose 5-phosphate + D-glyceraldehyde 3-phosphate + L-glutamine = pyridoxal 5'-phosphate + L-glutamate + phosphate + 3 H2O + H(+). The catalysed reaction is L-glutamine + H2O = L-glutamate + NH4(+). Its pathway is cofactor biosynthesis; pyridoxal 5'-phosphate biosynthesis. In terms of biological role, catalyzes the hydrolysis of glutamine to glutamate and ammonia as part of the biosynthesis of pyridoxal 5'-phosphate. The resulting ammonia molecule is channeled to the active site of PdxS. The polypeptide is Pyridoxal 5'-phosphate synthase subunit PdxT (Hyperthermus butylicus (strain DSM 5456 / JCM 9403 / PLM1-5)).